The following is a 391-amino-acid chain: DNA replication and repair protein RecF (391 aa).

Residue 30 to 37 coordinates ATP; that stretch reads GLNGQGKT.

The protein belongs to the RecF family.

It localises to the cytoplasm. The RecF protein is involved in DNA metabolism; it is required for DNA replication and normal SOS inducibility. RecF binds preferentially to single-stranded, linear DNA. It also seems to bind ATP. The protein is DNA replication and repair protein RecF of Kineococcus radiotolerans (strain ATCC BAA-149 / DSM 14245 / SRS30216).